Consider the following 222-residue polypeptide: Probable pyridoxal 5'-phosphate synthase subunit SNO3 (222 aa).

58 to 60 provides a ligand contact to L-glutamine; sequence GES. The active-site Nucleophile is the Cys91. L-glutamine is bound by residues Arg120 and 151-152; that span reads IR. Residues His197 and Glu199 each act as charge relay system in the active site.

Belongs to the glutaminase PdxT/SNO family.

It carries out the reaction aldehydo-D-ribose 5-phosphate + D-glyceraldehyde 3-phosphate + L-glutamine = pyridoxal 5'-phosphate + L-glutamate + phosphate + 3 H2O + H(+). It catalyses the reaction L-glutamine + H2O = L-glutamate + NH4(+). The protein operates within cofactor biosynthesis; pyridoxal 5'-phosphate biosynthesis. Its function is as follows. Catalyzes the hydrolysis of glutamine to glutamate and ammonia as part of the biosynthesis of pyridoxal 5'-phosphate. The resulting ammonia molecule is channeled to the active site of a SNZ isoform. The chain is Probable pyridoxal 5'-phosphate synthase subunit SNO3 (SNO3) from Saccharomyces cerevisiae (strain ATCC 204508 / S288c) (Baker's yeast).